A 975-amino-acid chain; its full sequence is 5'-3' exoribonuclease 2 homolog (975 aa).

The CCHC-type zinc finger occupies 262–279 (RACDLCGQYGHELKECRG). Disordered regions lie at residues 424–443 (MQMY…GRGQ) and 505–532 (SPAD…EGPK). The tract at residues 534-787 (DIRLYESGWK…GICVLYEDPE (254 aa)) is interaction with paxt-1. Over residues 804 to 821 (EPEKTLKPDDWNDRRDGR) the composition is skewed to basic and acidic residues. The interval 804–975 (EPEKTLKPDD…GGYHGNSSWR (172 aa)) is disordered. Gly residues-rich tracts occupy residues 850–860 (RGGGGGGGGYR), 886–895 (NYGGRDGGGP), and 908–932 (GYQG…GGGS).

It belongs to the 5'-3' exonuclease family. XRN2/RAT1 subfamily. As to quaternary structure, interacts with paxt-1 (via N-terminus); the interaction is direct and results in stabilization of xrn-2 in the complex. As to expression, expressed in the pharyngeal myoepithelium and intestine. Also expressed in several anterior neurons including the sensory neurons, as well as the interneuron PVT and the pharyngeal motorneuron M5.

It is found in the nucleus. Possesses 5'-&gt;3' exoribonuclease activity. Plays a role in maintenance of steady-state concentration and turnover of microRNAs (miRNA) by degradation of mature miRNA. Degradation role is enhanced when in complex with paxt-1. Partially redundant to xrn-1 in miRNA guide strand degradation. Implicated in differential regulation of mRNAs such as let-7 by controlling the accumulation of mature miRNA. Positively regulates molting of the pharyngeal cuticle. In Caenorhabditis elegans, this protein is 5'-3' exoribonuclease 2 homolog.